A 42-amino-acid chain; its full sequence is Photosystem I reaction center subunit IX (42 aa).

A helical transmembrane segment spans residues 7 to 27 (FLSTAPVLIMALLTFTAGLLI).

The protein belongs to the PsaJ family.

It localises to the cellular thylakoid membrane. Functionally, may help in the organization of the PsaE and PsaF subunits. In Rippkaea orientalis (strain PCC 8801 / RF-1) (Cyanothece sp. (strain PCC 8801)), this protein is Photosystem I reaction center subunit IX.